Reading from the N-terminus, the 145-residue chain is Hemoglobin fetal subunit beta (145 aa).

The 145-residue stretch at 1 to 145 folds into the Globin domain; sequence MLTAEEKASV…VANALAHRYH (145 aa). Positions 62 and 91 each coordinate heme b.

It belongs to the globin family. Heterotetramer of two alpha chains and two beta chains.

The sequence is that of Hemoglobin fetal subunit beta from Ovis aries (Sheep).